Reading from the N-terminus, the 417-residue chain is Diphosphomevalonate decarboxylase 1 (417 aa).

Residue 22-25 participates in (R)-5-diphosphomevalonate binding; the sequence is YWGK. Residues 39-47 carry the Peroxisomal targeting signal PTS2 motif; it reads RVSLDPDHL. (R)-5-diphosphomevalonate is bound by residues Arg77, 160–165, and Thr216; that span reads SGSACR.

The protein belongs to the diphosphomevalonate decarboxylase family. As to quaternary structure, homodimer.

The protein resides in the peroxisome. It carries out the reaction (R)-5-diphosphomevalonate + ATP = isopentenyl diphosphate + ADP + phosphate + CO2. It functions in the pathway isoprenoid biosynthesis; isopentenyl diphosphate biosynthesis via mevalonate pathway; isopentenyl diphosphate from (R)-mevalonate: step 3/3. Functionally, performs the first committed step in the biosynthesis of isoprene-containing compounds such as sterols and terpenoids. Component of the triterpene saponins (e.g. ginsenosides or panaxosides) and phytosterols biosynthetic pathways. Catalyzes the conversion of mevalonate diphosphate to isopentenyl diphosphate (IPP). This is Diphosphomevalonate decarboxylase 1 from Panax ginseng (Korean ginseng).